The sequence spans 152 residues: Deoxyuridine 5'-triphosphate nucleotidohydrolase (152 aa).

Substrate-binding positions include 71–73, Asn-84, 88–90, and Met-98; these read RSG and LID.

Belongs to the dUTPase family. Mg(2+) serves as cofactor.

It catalyses the reaction dUTP + H2O = dUMP + diphosphate + H(+). It functions in the pathway pyrimidine metabolism; dUMP biosynthesis; dUMP from dCTP (dUTP route): step 2/2. This enzyme is involved in nucleotide metabolism: it produces dUMP, the immediate precursor of thymidine nucleotides and it decreases the intracellular concentration of dUTP so that uracil cannot be incorporated into DNA. The sequence is that of Deoxyuridine 5'-triphosphate nucleotidohydrolase from Shewanella piezotolerans (strain WP3 / JCM 13877).